A 473-amino-acid polypeptide reads, in one-letter code: 3-isopropylmalate dehydratase large subunit (473 aa).

[4Fe-4S] cluster is bound by residues cysteine 354, cysteine 414, and cysteine 417.

It belongs to the aconitase/IPM isomerase family. LeuC type 1 subfamily. As to quaternary structure, heterodimer of LeuC and LeuD. [4Fe-4S] cluster serves as cofactor.

It catalyses the reaction (2R,3S)-3-isopropylmalate = (2S)-2-isopropylmalate. Its pathway is amino-acid biosynthesis; L-leucine biosynthesis; L-leucine from 3-methyl-2-oxobutanoate: step 2/4. Functionally, catalyzes the isomerization between 2-isopropylmalate and 3-isopropylmalate, via the formation of 2-isopropylmaleate. In Mycobacterium marinum (strain ATCC BAA-535 / M), this protein is 3-isopropylmalate dehydratase large subunit.